Reading from the N-terminus, the 192-residue chain is Xanthine phosphoribosyltransferase (192 aa).

Residues Leu20 and Thr26 each contribute to the xanthine site. Position 127 to 131 (127 to 131 (ANGQA)) interacts with 5-phospho-alpha-D-ribose 1-diphosphate. Residue Lys155 coordinates xanthine.

It belongs to the purine/pyrimidine phosphoribosyltransferase family. Xpt subfamily. Homodimer.

It is found in the cytoplasm. It catalyses the reaction XMP + diphosphate = xanthine + 5-phospho-alpha-D-ribose 1-diphosphate. Its pathway is purine metabolism; XMP biosynthesis via salvage pathway; XMP from xanthine: step 1/1. Its function is as follows. Converts the preformed base xanthine, a product of nucleic acid breakdown, to xanthosine 5'-monophosphate (XMP), so it can be reused for RNA or DNA synthesis. The protein is Xanthine phosphoribosyltransferase of Streptococcus thermophilus.